The following is a 275-amino-acid chain: Large ribosomal subunit protein uL2c (275 aa).

The tract at residues 225 to 252 (MNPCDHPHGGGEGRSPIGRAKPVTPWGK) is disordered.

It belongs to the universal ribosomal protein uL2 family. Part of the 50S ribosomal subunit.

It localises to the plastid. It is found in the chloroplast. The chain is Large ribosomal subunit protein uL2c (rpl2) from Guillardia theta (Cryptophyte).